The primary structure comprises 195 residues: Imidazoleglycerol-phosphate dehydratase (195 aa).

The protein belongs to the imidazoleglycerol-phosphate dehydratase family.

It is found in the cytoplasm. The catalysed reaction is D-erythro-1-(imidazol-4-yl)glycerol 3-phosphate = 3-(imidazol-4-yl)-2-oxopropyl phosphate + H2O. Its pathway is amino-acid biosynthesis; L-histidine biosynthesis; L-histidine from 5-phospho-alpha-D-ribose 1-diphosphate: step 6/9. The sequence is that of Imidazoleglycerol-phosphate dehydratase from Sphingopyxis alaskensis (strain DSM 13593 / LMG 18877 / RB2256) (Sphingomonas alaskensis).